Reading from the N-terminus, the 125-residue chain is RutC family protein STK_08110 (125 aa).

This sequence belongs to the RutC family.

This chain is RutC family protein STK_08110, found in Sulfurisphaera tokodaii (strain DSM 16993 / JCM 10545 / NBRC 100140 / 7) (Sulfolobus tokodaii).